We begin with the raw amino-acid sequence, 78 residues long: Large ribosomal subunit protein bL28 (78 aa).

Positions 1–20 are disordered; that stretch reads MSRVCQVTGKGPVTGNNISH.

This sequence belongs to the bacterial ribosomal protein bL28 family.

This chain is Large ribosomal subunit protein bL28, found in Pseudomonas putida (strain W619).